A 124-amino-acid chain; its full sequence is Group 1 truncated hemoglobin GlbN (124 aa).

Heme-binding residues include histidine 46, histidine 70, and histidine 117.

This sequence belongs to the truncated hemoglobin family. Group I subfamily. In terms of assembly, monomer. Heme serves as cofactor.

Forms a very stable complex with oxygen. The oxygen dissociation rate is 0.011 sec(-1). This Synechocystis sp. (strain ATCC 27184 / PCC 6803 / Kazusa) protein is Group 1 truncated hemoglobin GlbN (glbN).